The following is a 505-amino-acid chain: 2-isopropylmalate synthase (505 aa).

The Pyruvate carboxyltransferase domain occupies 5-269 (IKIFDTTLRD…ETGIHTEYLY (265 aa)). The Mn(2+) site is built by Asp-14, His-204, His-206, and Asn-240. The tract at residues 393–505 (SLLYFHTFTG…AVNRFELRKR (113 aa)) is regulatory domain.

The protein belongs to the alpha-IPM synthase/homocitrate synthase family. LeuA type 1 subfamily. In terms of assembly, homodimer. Mn(2+) is required as a cofactor.

It localises to the cytoplasm. The enzyme catalyses 3-methyl-2-oxobutanoate + acetyl-CoA + H2O = (2S)-2-isopropylmalate + CoA + H(+). It participates in amino-acid biosynthesis; L-leucine biosynthesis; L-leucine from 3-methyl-2-oxobutanoate: step 1/4. Its function is as follows. Catalyzes the condensation of the acetyl group of acetyl-CoA with 3-methyl-2-oxobutanoate (2-ketoisovalerate) to form 3-carboxy-3-hydroxy-4-methylpentanoate (2-isopropylmalate). This is 2-isopropylmalate synthase from Sediminispirochaeta smaragdinae (strain DSM 11293 / JCM 15392 / SEBR 4228) (Spirochaeta smaragdinae).